Reading from the N-terminus, the 602-residue chain is Elongation factor 4 (602 aa).

One can recognise a tr-type G domain in the interval 6–188 (DHIRNFSIVA…AIVTQLPAPK (183 aa)). Residues 18–23 (DHGKST) and 135–138 (NKID) contribute to the GTP site.

It belongs to the TRAFAC class translation factor GTPase superfamily. Classic translation factor GTPase family. LepA subfamily.

It localises to the cell inner membrane. The enzyme catalyses GTP + H2O = GDP + phosphate + H(+). Its function is as follows. Required for accurate and efficient protein synthesis under certain stress conditions. May act as a fidelity factor of the translation reaction, by catalyzing a one-codon backward translocation of tRNAs on improperly translocated ribosomes. Back-translocation proceeds from a post-translocation (POST) complex to a pre-translocation (PRE) complex, thus giving elongation factor G a second chance to translocate the tRNAs correctly. Binds to ribosomes in a GTP-dependent manner. This Brucella anthropi (strain ATCC 49188 / DSM 6882 / CCUG 24695 / JCM 21032 / LMG 3331 / NBRC 15819 / NCTC 12168 / Alc 37) (Ochrobactrum anthropi) protein is Elongation factor 4.